The sequence spans 639 residues: Poly(A)-specific ribonuclease PARN (639 aa).

A divalent metal cation-binding residues include D28 and E30. Residues S163 and S167 each carry the phosphoserine modification. Residues 178 to 245 (KKFIDQVVEK…ERYIVISKVD (68 aa)) enclose the R3H domain. K220 carries the N6-acetyllysine modification. Residues D292 and D382 each contribute to the a divalent metal cation site. K499 is modified (N6-acetyllysine). A Phosphoserine modification is found at S530. At S557 the chain carries Phosphoserine; by MAPKAPK2. Positions 560-639 (APSTVGKRNL…ATLFEVPDTW (80 aa)) are disordered. A phosphoserine mark is found at S583 and S587. The span at 606-615 (KKAKKLKRMK) shows a compositional bias: basic residues. Phosphoserine is present on residues S619, S623, and S628. At T631 the chain carries Phosphothreonine.

Belongs to the CAF1 family. Homodimer. Found in a mRNA decay complex with RENT1, RENT2 and RENT3B. Interacts with KHSRP. Interacts with CELF1/CUGBP1. Interacts with ZC3HAV1 in an RNA-independent manner. Interacts with DHX36. Mg(2+) is required as a cofactor. Phosphorylation by MAPKAPK2, preventing GADD45A mRNA degradation after genotoxic stress. In terms of tissue distribution, ubiquitous.

It localises to the nucleus. The protein localises to the cytoplasm. The protein resides in the nucleolus. The enzyme catalyses Exonucleolytic cleavage of poly(A) to 5'-AMP.. In terms of biological role, 3'-exoribonuclease that has a preference for poly(A) tails of mRNAs, thereby efficiently degrading poly(A) tails. Exonucleolytic degradation of the poly(A) tail is often the first step in the decay of eukaryotic mRNAs and is also used to silence certain maternal mRNAs translationally during oocyte maturation and early embryonic development. Interacts with both the 3'-end poly(A) tail and the 5'-end cap structure during degradation, the interaction with the cap structure being required for an efficient degradation of poly(A) tails. Involved in nonsense-mediated mRNA decay, a critical process of selective degradation of mRNAs that contain premature stop codons. Also involved in degradation of inherently unstable mRNAs that contain AU-rich elements (AREs) in their 3'-UTR, possibly via its interaction with KHSRP. Probably mediates the removal of poly(A) tails of AREs mRNAs, which constitutes the first step of destabilization. Also able to recognize and trim poly(A) tails of microRNAs such as MIR21 and H/ACA box snoRNAs (small nucleolar RNAs) leading to microRNAs degradation or snoRNA increased stability. This chain is Poly(A)-specific ribonuclease PARN (PARN), found in Homo sapiens (Human).